The primary structure comprises 86 residues: Kappa-theraphotoxin-Cg1a 2 (86 aa).

The N-terminal stretch at 1–21 is a signal peptide; the sequence is MKVSVVITLAVLGVMFVWASA. The propeptide occupies 22–50; sequence AELEERGSDQRDSPAWLKSMERIFQSEER. 3 disulfide bridges follow: Cys-52–Cys-66, Cys-59–Cys-71, and Cys-65–Cys-78. Position 84 is a phenylalanine amide (Phe-84).

Belongs to the neurotoxin 10 (Hwtx-1) family. 28 (Jztx-11) subfamily. In terms of tissue distribution, expressed by the venom gland.

Its subcellular location is the secreted. Functionally, this toxin acts as a voltage-dependent gating-modifier. It inhibits the sodium conductance (IC(50)=124 nM) and slows the fast inactivation (EC(50)=1180 nM) of Nav1.5/SCN5A. It significantly shifts the activation to more depolarized voltages and decreases the deactivation of Nav1.5 currents upon extreme depolarization, but only slightly affects voltage-dependence of steady-state inactivation. In addition, this toxin causes an approximately five-fold decrease in the rate of recovery from inactivation and an approximately 1.9-fold reduction in the closed-state inactivation rate. This toxin integrates the functions of site 3 toxins (alpha-scorpion toxins) with site 4 toxins (beta-scorpion and spider toxins) by targeting multiple sites on Nav1.5. Also shows inhibition of voltage-gated potassium channels (5 uM completely inhibits Kv2.1/KCNB1, whereas 5 uM moderately inhibits Kv4.2/KCND2 Kv4.1/KCND1 channels). The chain is Kappa-theraphotoxin-Cg1a 2 from Chilobrachys guangxiensis (Chinese earth tiger tarantula).